We begin with the raw amino-acid sequence, 349 residues long: Peroxidase 7 (349 aa).

The first 22 residues, 1-22, serve as a signal peptide directing secretion; that stretch reads MKLAVVSVVVILGVLVAWPVSA. Cystine bridges form between Cys60–Cys136, Cys93–Cys98, Cys142–Cys341, and Cys220–Cys252. The active-site Proton acceptor is the His91. Ca(2+) contacts are provided by Asp92, Val95, Gly97, Asp99, and Ser101. Pro183 contributes to the substrate binding site. Residue His213 coordinates heme b. Residue Thr214 participates in Ca(2+) binding. A glycan (N-linked (GlcNAc...) asparagine) is linked at Asn231. Positions 262, 265, and 270 each coordinate Ca(2+).

It belongs to the peroxidase family. Classical plant (class III) peroxidase subfamily. Heme b serves as cofactor. Requires Ca(2+) as cofactor.

It localises to the secreted. The catalysed reaction is 2 a phenolic donor + H2O2 = 2 a phenolic radical donor + 2 H2O. Removal of H(2)O(2), oxidation of toxic reductants, biosynthesis and degradation of lignin, suberization, auxin catabolism, response to environmental stresses such as wounding, pathogen attack and oxidative stress. These functions might be dependent on each isozyme/isoform in each plant tissue. This Arabidopsis thaliana (Mouse-ear cress) protein is Peroxidase 7 (PER7).